The primary structure comprises 484 residues: GTPase Obg (484 aa).

The 158-residue stretch at 7 to 164 (PRFVDRVVIH…RDLTLELKTV (158 aa)) folds into the Obg domain. Residues 21–43 (SGGNGCASVHREKFKPLGGPDGG) form a disordered region. One can recognise an OBG-type G domain in the interval 165–345 (ADVGLVGFPS…LIFGLSQMIS (181 aa)). GTP contacts are provided by residues 171–178 (GFPSAGKS), 196–200 (FTTLV), 217–220 (DVPG), 297–300 (NKID), and 326–328 (STA). Residues serine 178 and threonine 198 each contribute to the Mg(2+) site. Residues 363 to 441 (PIPVDDSGFT…IGEMTFDWEP (79 aa)) enclose the OCT domain. Residues 439 to 484 (WEPQTPAGEPVAMSGRGTDPRLDSNKRVGAAERKAARSRRREHGDG) are disordered. Over residues 456–473 (TDPRLDSNKRVGAAERKA) the composition is skewed to basic and acidic residues. The span at 474-484 (ARSRRREHGDG) shows a compositional bias: basic residues.

The protein belongs to the TRAFAC class OBG-HflX-like GTPase superfamily. OBG GTPase family. In terms of assembly, monomer. Mg(2+) serves as cofactor.

It localises to the cytoplasm. Its function is as follows. An essential GTPase which binds GTP, GDP and possibly (p)ppGpp with moderate affinity, with high nucleotide exchange rates and a fairly low GTP hydrolysis rate. Plays a role in control of the cell cycle, stress response, ribosome biogenesis and in those bacteria that undergo differentiation, in morphogenesis control. This is GTPase Obg from Mycobacterium tuberculosis (strain CDC 1551 / Oshkosh).